We begin with the raw amino-acid sequence, 602 residues long: uncharacterized protein (602 aa).

Residues 51–210 (QYLGTQPRDF…PFVSYQPDAD (160 aa)) form the Helicase ATP-binding domain. A compositionally biased stretch (basic and acidic residues) spans 430–439 (PHRESAHDPL). Disordered stretches follow at residues 430–452 (PHRE…TERG) and 518–538 (RAQL…ASVH). A compositionally biased stretch (polar residues) spans 523-534 (KGATQPATSGAS).

It to M.leprae ML1624.

This is an uncharacterized protein from Mycobacterium tuberculosis (strain ATCC 25618 / H37Rv).